Consider the following 128-residue polypeptide: Large ribosomal subunit protein bL20c (128 aa).

The protein belongs to the bacterial ribosomal protein bL20 family.

It localises to the plastid. Functionally, binds directly to 23S ribosomal RNA and is necessary for the in vitro assembly process of the 50S ribosomal subunit. It is not involved in the protein synthesizing functions of that subunit. This is Large ribosomal subunit protein bL20c (rpl20) from Lathraea clandestina (Purple toothwort).